A 219-amino-acid chain; its full sequence is 2-hydroxy-3-keto-5-methylthiopentenyl-1-phosphate phosphatase (219 aa).

The protein belongs to the HAD-like hydrolase superfamily. MtnX family.

It catalyses the reaction 2-hydroxy-5-methylsulfanyl-3-oxopent-1-enyl phosphate + H2O = 1,2-dihydroxy-5-(methylsulfanyl)pent-1-en-3-one + phosphate. It functions in the pathway amino-acid biosynthesis; L-methionine biosynthesis via salvage pathway; L-methionine from S-methyl-5-thio-alpha-D-ribose 1-phosphate: step 4/6. Functionally, dephosphorylates 2-hydroxy-3-keto-5-methylthiopentenyl-1-phosphate (HK-MTPenyl-1-P) yielding 1,2-dihydroxy-3-keto-5-methylthiopentene (DHK-MTPene). The protein is 2-hydroxy-3-keto-5-methylthiopentenyl-1-phosphate phosphatase of Bacillus cereus (strain G9842).